Consider the following 509-residue polypeptide: Cytochrome P450 4X1 (509 aa).

The helical transmembrane segment at 14–34 threads the bilayer; sequence FYLAFVFCLALGLLQAIKLYL. Cys454 contacts heme.

The protein belongs to the cytochrome P450 family. Requires heme as cofactor. As to expression, expressed in brain, heart, kidney and skin and, at lower levels, in skeletal muscle and liver. In the brain, high levels are detected in amygdala and lower levels in globus pallidus and cerebellum. In the heart, very high levels in aorta, but very low levels in other heart regions. Also expressed in breast, prostate and colon.

The protein resides in the endoplasmic reticulum membrane. The protein localises to the microsome membrane. The catalysed reaction is N-(5Z,8Z,11Z,14Z-eicosatetraenoyl)-ethanolamine + reduced [NADPH--hemoprotein reductase] + O2 = N-(14,15-epoxy-5Z,8Z,11Z-eicosatrienoyl)-ethanolamine + oxidized [NADPH--hemoprotein reductase] + H2O + H(+). A cytochrome P450 monooxygenase that selectively catalyzes the epoxidation of the last double bond of the arachidonoyl moiety of anandamide, potentially modulating endocannabinoid signaling. Has no hydroxylase activity toward various fatty acids, steroids and prostaglandins. Mechanistically, uses molecular oxygen inserting one oxygen atom into a substrate, and reducing the second into a water molecule, with two electrons provided by NADPH via cytochrome P450 reductase (CPR; NADPH-ferrihemoprotein reductase). This is Cytochrome P450 4X1 from Homo sapiens (Human).